Consider the following 171-residue polypeptide: Neudesin (171 aa).

The first 30 residues, 1–30 (MARPAPWWWLRPLAALALALALVRVPSARA), serve as a signal peptide directing secretion. Residues 43–128 (VRLFTEEELA…KELEALDDIF (86 aa)) form the Cytochrome b5 heme-binding domain. At Lys135 the chain carries N6-acetyllysine. The tract at residues 151–171 (GSPNLDFKPEDQPHFDIKDEF) is disordered. The segment covering 157-171 (FKPEDQPHFDIKDEF) has biased composition (basic and acidic residues).

Belongs to the cytochrome b5 family. MAPR subfamily. Interacts with PINK1 and PARK7.

Its subcellular location is the secreted. It localises to the extracellular space. It is found in the mitochondrion. The protein resides in the endoplasmic reticulum. In terms of biological role, acts as a neurotrophic factor in postnatal mature neurons enhancing neuronal survival. Promotes cell proliferation and neurogenesis in undifferentiated neural progenitor cells at the embryonic stage and inhibits differentiation of astrocytes. Its neurotrophic activity is exerted via MAPK1/ERK2, MAPK3/ERK1 and AKT1/AKT pathways. Neurotrophic activity is enhanced by binding to heme. Also acts as an anorexigenic neurotrophic factor that contributes to energy balance. The protein is Neudesin of Rattus norvegicus (Rat).